We begin with the raw amino-acid sequence, 99 residues long: Large ribosomal subunit protein uL23 (99 aa).

Belongs to the universal ribosomal protein uL23 family. As to quaternary structure, part of the 50S ribosomal subunit. Contacts protein L29, and trigger factor when it is bound to the ribosome.

One of the early assembly proteins it binds 23S rRNA. One of the proteins that surrounds the polypeptide exit tunnel on the outside of the ribosome. Forms the main docking site for trigger factor binding to the ribosome. The polypeptide is Large ribosomal subunit protein uL23 (Xanthomonas campestris pv. campestris (strain B100)).